Reading from the N-terminus, the 267-residue chain is MTTRIAIVGAAGRMGRMLIEAVGEADGAELVAAVDRPGSDFVGADAGELAGIGRLGLAVGDDLEAALAAADVLIDFTLPEATGGVLQACRTTGTALVIGTTGLGEAQLAALDAAAGEIPLVFAPNYSTGVNLTLKLAELAARALGDSVDIEIIEAHHRHKVDAPSGTALALGQRVADTLGRDLKQCAVYGREGRTGERDRQTIGFETIRAGDIVGEHTVLYAGAGERIEITHRASNRMTFAAGAVRAAQWVAGREPGRYDMQDVLGL.

NAD(+) is bound by residues 9 to 14 (GAAGRM) and Asp-35. Arg-36 contacts NADP(+). NAD(+)-binding positions include 99–101 (GTT) and 123–126 (APNY). The active-site Proton donor/acceptor is the His-156. His-157 serves as a coordination point for (S)-2,3,4,5-tetrahydrodipicolinate. The Proton donor role is filled by Lys-160. 166 to 167 (GT) lines the (S)-2,3,4,5-tetrahydrodipicolinate pocket.

It belongs to the DapB family.

It is found in the cytoplasm. The catalysed reaction is (S)-2,3,4,5-tetrahydrodipicolinate + NAD(+) + H2O = (2S,4S)-4-hydroxy-2,3,4,5-tetrahydrodipicolinate + NADH + H(+). It carries out the reaction (S)-2,3,4,5-tetrahydrodipicolinate + NADP(+) + H2O = (2S,4S)-4-hydroxy-2,3,4,5-tetrahydrodipicolinate + NADPH + H(+). It participates in amino-acid biosynthesis; L-lysine biosynthesis via DAP pathway; (S)-tetrahydrodipicolinate from L-aspartate: step 4/4. Its function is as follows. Catalyzes the conversion of 4-hydroxy-tetrahydrodipicolinate (HTPA) to tetrahydrodipicolinate. This is 4-hydroxy-tetrahydrodipicolinate reductase from Alkalilimnicola ehrlichii (strain ATCC BAA-1101 / DSM 17681 / MLHE-1).